A 182-amino-acid chain; its full sequence is NADH-ubiquinone oxidoreductase 20 kDa subunit (182 aa).

[4Fe-4S] cluster is bound by residues cysteine 57, cysteine 58, cysteine 122, and cysteine 152.

This sequence belongs to the complex I 20 kDa subunit family. The cofactor is [4Fe-4S] cluster.

It localises to the mitochondrion. The enzyme catalyses a ubiquinone + NADH + 5 H(+)(in) = a ubiquinol + NAD(+) + 4 H(+)(out). This chain is NADH-ubiquinone oxidoreductase 20 kDa subunit (NAD10), found in Reclinomonas americana.